A 172-amino-acid chain; its full sequence is S-ribosylhomocysteine lyase (172 aa).

Fe cation-binding residues include His-54, His-58, and Cys-128.

The protein belongs to the LuxS family. As to quaternary structure, homodimer. The cofactor is Fe cation.

It catalyses the reaction S-(5-deoxy-D-ribos-5-yl)-L-homocysteine = (S)-4,5-dihydroxypentane-2,3-dione + L-homocysteine. Its function is as follows. Involved in the synthesis of autoinducer 2 (AI-2) which is secreted by bacteria and is used to communicate both the cell density and the metabolic potential of the environment. The regulation of gene expression in response to changes in cell density is called quorum sensing. Catalyzes the transformation of S-ribosylhomocysteine (RHC) to homocysteine (HC) and 4,5-dihydroxy-2,3-pentadione (DPD). The protein is S-ribosylhomocysteine lyase of Vibrio cholerae serotype O1 (strain ATCC 39541 / Classical Ogawa 395 / O395).